Reading from the N-terminus, the 314-residue chain is Hydroxyethylthiazole kinase (314 aa).

A compositionally biased stretch (low complexity) spans 1-13; it reads MSNSASSFADVSS. The segment at 1–24 is disordered; that stretch reads MSNSASSFADVSSGCTAGTPVPAD. A substrate-binding site is contributed by Met-70. ATP contacts are provided by Arg-145 and Ser-217. Residue Gly-244 coordinates substrate.

This sequence belongs to the Thz kinase family. It depends on Mg(2+) as a cofactor.

It catalyses the reaction 5-(2-hydroxyethyl)-4-methylthiazole + ATP = 4-methyl-5-(2-phosphooxyethyl)-thiazole + ADP + H(+). It functions in the pathway cofactor biosynthesis; thiamine diphosphate biosynthesis; 4-methyl-5-(2-phosphoethyl)-thiazole from 5-(2-hydroxyethyl)-4-methylthiazole: step 1/1. Its function is as follows. Catalyzes the phosphorylation of the hydroxyl group of 4-methyl-5-beta-hydroxyethylthiazole (THZ). This is Hydroxyethylthiazole kinase from Bifidobacterium longum subsp. infantis (strain ATCC 15697 / DSM 20088 / JCM 1222 / NCTC 11817 / S12).